A 194-amino-acid chain; its full sequence is Ion-translocating oxidoreductase complex subunit A (194 aa).

Helical transmembrane passes span 4–24 (LVLIMVSAILVNNFVLVQFLG), 39–59 (IGLSLATTFVLTLAAMCSYLV), 71–91 (FLRTISFILVIAVTVQFTEMV), 102–122 (VLGIFLPLITTNCIVLGVALL), 131–151 (FITATVNGFAAGLGFSLVLVL), and 172–192 (AIGMITAGLMSLAFMGFAGLI).

It belongs to the NqrDE/RnfAE family. The complex is composed of six subunits: RnfA, RnfB, RnfC, RnfD, RnfE and RnfG.

It localises to the cell inner membrane. In terms of biological role, part of a membrane-bound complex that couples electron transfer with translocation of ions across the membrane. This chain is Ion-translocating oxidoreductase complex subunit A, found in Ectopseudomonas mendocina (strain ymp) (Pseudomonas mendocina).